Reading from the N-terminus, the 99-residue chain is Prostate and testis expressed protein 14 (99 aa).

The N-terminal stretch at Met1–Ala21 is a signal peptide. The region spanning Leu22–Phe99 is the UPAR/Ly6 domain. 5 cysteine pairs are disulfide-bonded: Cys24–Cys51, Cys27–Cys36, Cys43–Cys69, Cys73–Cys89, and Cys90–Cys96. N-linked (GlcNAc...) asparagine glycosylation occurs at Asn40. Residues Asn75 and Asn82 are each glycosylated (N-linked (GlcNAc...) asparagine).

It belongs to the PATE family. Monomer.

It localises to the secreted. In Rattus norvegicus (Rat), this protein is Prostate and testis expressed protein 14.